We begin with the raw amino-acid sequence, 1362 residues long: Integrator complex subunit 2 homolog (1362 aa).

Residues 1–10 (MITSNNNNKN) are compositionally biased toward low complexity. 3 disordered regions span residues 1-20 (MITS…EMKS), 629-660 (TTGT…SSPN), and 928-963 (NNNK…EEEE). Over residues 945–955 (DDVKMKDKEKE) the composition is skewed to basic and acidic residues.

It belongs to the Integrator subunit 2 family. In terms of assembly, component of the Integrator complex. The core complex associates with protein phosphatase 2A subunits, to form the Integrator-PP2A (INTAC) complex.

The protein localises to the nucleus. Its subcellular location is the cytoplasm. Component of the integrator complex, a multiprotein complex that terminates RNA polymerase II (Pol II) transcription in the promoter-proximal region of genes. The integrator complex provides a quality checkpoint during transcription elongation by driving premature transcription termination of transcripts that are unfavorably configured for transcriptional elongation: the complex terminates transcription by (1) catalyzing dephosphorylation of the C-terminal domain (CTD) of Pol II subunit polr2a, (2) degrading the exiting nascent RNA transcript via endonuclease activity and (3) promoting the release of Pol II from bound DNA. The integrator complex is also involved in terminating the synthesis of non-coding Pol II transcripts, such as enhancer RNAs (eRNAs), small nuclear RNAs (snRNAs), telomerase RNAs and long non-coding RNAs (lncRNAs). In Dictyostelium discoideum (Social amoeba), this protein is Integrator complex subunit 2 homolog (ints2).